Reading from the N-terminus, the 156-residue chain is Methylated-DNA--protein-cysteine methyltransferase (156 aa).

Cysteine 126 (nucleophile; methyl group acceptor) is an active-site residue.

It belongs to the MGMT family.

The protein localises to the cytoplasm. The catalysed reaction is a 6-O-methyl-2'-deoxyguanosine in DNA + L-cysteinyl-[protein] = S-methyl-L-cysteinyl-[protein] + a 2'-deoxyguanosine in DNA. The enzyme catalyses a 4-O-methyl-thymidine in DNA + L-cysteinyl-[protein] = a thymidine in DNA + S-methyl-L-cysteinyl-[protein]. Functionally, involved in the cellular defense against the biological effects of O6-methylguanine (O6-MeG) and O4-methylthymine (O4-MeT) in DNA. Repairs the methylated nucleobase in DNA by stoichiometrically transferring the methyl group to a cysteine residue in the enzyme. This is a suicide reaction: the enzyme is irreversibly inactivated. The polypeptide is Methylated-DNA--protein-cysteine methyltransferase (Methanosarcina acetivorans (strain ATCC 35395 / DSM 2834 / JCM 12185 / C2A)).